The primary structure comprises 1342 residues: DNA-directed RNA polymerase subunit beta (1342 aa).

N6-acetyllysine is present on residues K1022 and K1200.

The protein belongs to the RNA polymerase beta chain family. The RNAP catalytic core consists of 2 alpha, 1 beta, 1 beta' and 1 omega subunit. When a sigma factor is associated with the core the holoenzyme is formed, which can initiate transcription.

The catalysed reaction is RNA(n) + a ribonucleoside 5'-triphosphate = RNA(n+1) + diphosphate. DNA-dependent RNA polymerase catalyzes the transcription of DNA into RNA using the four ribonucleoside triphosphates as substrates. The chain is DNA-directed RNA polymerase subunit beta from Shigella flexneri serotype 5b (strain 8401).